The primary structure comprises 496 residues: Glycylpeptide N-tetradecanoyltransferase 1 (496 aa).

A disordered region spans residues 1–81; that stretch reads MADESETAVK…DSTQDQPVKM (81 aa). Residues serine 31 and serine 47 each carry the phosphoserine modification. Positions 55–66 are enriched in basic residues; sequence KKKKKKQKKKKE. Serine 83 carries the phosphoserine modification. Residues glutamine 118, phenylalanine 119, tryptophan 120, phenylalanine 247, leucine 248, cysteine 249, valine 250, serine 256, arginine 258, valine 259, and alanine 260 each coordinate tetradecanoyl-CoA.

Belongs to the NMT family.

The protein resides in the cytoplasm. It localises to the cytosol. The protein localises to the membrane. It carries out the reaction N-terminal glycyl-[protein] + tetradecanoyl-CoA = N-tetradecanoylglycyl-[protein] + CoA + H(+). The enzyme catalyses N-terminal glycyl-L-lysyl-[protein] + tetradecanoyl-CoA = N-terminal glycyl-(N(6)-tetradecanoyl)-L-lysyl-[protein] + CoA + H(+). In terms of biological role, adds a myristoyl group to the N-terminal glycine residue of certain cellular and viral proteins. Also able to mediate N-terminal lysine myristoylation of proteins: catalyzes myristoylation of ARF6 on both 'Gly-2' and 'Lys-3'. Lysine myristoylation is required to maintain ARF6 on membranes during the GTPase cycle. This chain is Glycylpeptide N-tetradecanoyltransferase 1 (Nmt1), found in Rattus norvegicus (Rat).